Here is a 225-residue protein sequence, read N- to C-terminus: uncharacterized protein (225 aa).

A disordered region spans residues 32–82 (PKDKKKQNDTENKKKQPKDGENDKQKEQAETQPFEWIQQKDADDKKESNTA). Basic and acidic residues-rich tracts occupy residues 37-60 (KQND…KEQA) and 69-79 (QQKDADDKKES).

Belongs to the MG067/MG068/MG395 family.

This is an uncharacterized protein from Mycoplasma pneumoniae (strain ATCC 29342 / M129 / Subtype 1) (Mycoplasmoides pneumoniae).